Reading from the N-terminus, the 452-residue chain is Chromosomal replication initiator protein DnaA (452 aa).

Residues 1 to 85 (MSTTAWQKCL…IEVGSKPVEA (85 aa)) are domain I, interacts with DnaA modulators. The tract at residues 85–115 (AVDTPAETIVTSSSTAPLKSAPKKAVDYKSS) is domain II. The segment at 116–332 (HLNKKFVFDS…GALRRVIANA (217 aa)) is domain III, AAA+ region. Residues G160, G162, K163, and T164 each coordinate ATP. The tract at residues 333 to 452 (HFTGKPITIE…YKNLMRILSS (120 aa)) is domain IV, binds dsDNA.

The protein belongs to the DnaA family. Oligomerizes as a right-handed, spiral filament on DNA at oriC.

The protein localises to the cytoplasm. Functionally, plays an essential role in the initiation and regulation of chromosomal replication. ATP-DnaA binds to the origin of replication (oriC) to initiate formation of the DNA replication initiation complex once per cell cycle. Binds the DnaA box (a 9 base pair repeat at the origin) and separates the double-stranded (ds)DNA. Forms a right-handed helical filament on oriC DNA; dsDNA binds to the exterior of the filament while single-stranded (ss)DNA is stabiized in the filament's interior. The ATP-DnaA-oriC complex binds and stabilizes one strand of the AT-rich DNA unwinding element (DUE), permitting loading of DNA polymerase. After initiation quickly degrades to an ADP-DnaA complex that is not apt for DNA replication. Binds acidic phospholipids. The protein is Chromosomal replication initiator protein DnaA of Legionella pneumophila (strain Paris).